The chain runs to 105 residues: UPF0060 membrane protein Reut_B3679 (105 aa).

4 consecutive transmembrane segments (helical) span residues 4–24 (IALY…PYLW), 28–48 (GASA…AWLL), 60–80 (AAYG…VDGV), and 82–102 (PSAW…IIVF).

Belongs to the UPF0060 family.

The protein localises to the cell inner membrane. This is UPF0060 membrane protein Reut_B3679 from Cupriavidus pinatubonensis (strain JMP 134 / LMG 1197) (Cupriavidus necator (strain JMP 134)).